The chain runs to 338 residues: Glyceraldehyde-3-phosphate dehydrogenase 1 (338 aa).

NAD(+) contacts are provided by residues 13–14 (TI) and G111. Position 140–142 (140–142 (SCN)) interacts with D-glyceraldehyde 3-phosphate. C141 serves as the catalytic Nucleophile. R169 serves as a coordination point for NAD(+). 195-196 (HG) serves as a coordination point for D-glyceraldehyde 3-phosphate. Residue Q300 coordinates NAD(+).

This sequence belongs to the glyceraldehyde-3-phosphate dehydrogenase family. Homotetramer.

Its subcellular location is the cytoplasm. The enzyme catalyses D-glyceraldehyde 3-phosphate + phosphate + NADP(+) = (2R)-3-phospho-glyceroyl phosphate + NADPH + H(+). It catalyses the reaction D-glyceraldehyde 3-phosphate + phosphate + NAD(+) = (2R)-3-phospho-glyceroyl phosphate + NADH + H(+). Its pathway is carbohydrate degradation; glycolysis; pyruvate from D-glyceraldehyde 3-phosphate: step 1/5. The chain is Glyceraldehyde-3-phosphate dehydrogenase 1 from Methanosarcina barkeri (strain Fusaro / DSM 804).